A 365-amino-acid chain; its full sequence is Histidinol-phosphate aminotransferase (365 aa).

Position 223 is an N6-(pyridoxal phosphate)lysine (lysine 223).

It belongs to the class-II pyridoxal-phosphate-dependent aminotransferase family. Histidinol-phosphate aminotransferase subfamily. As to quaternary structure, homodimer. Pyridoxal 5'-phosphate is required as a cofactor.

It catalyses the reaction L-histidinol phosphate + 2-oxoglutarate = 3-(imidazol-4-yl)-2-oxopropyl phosphate + L-glutamate. Its pathway is amino-acid biosynthesis; L-histidine biosynthesis; L-histidine from 5-phospho-alpha-D-ribose 1-diphosphate: step 7/9. In Brucella abortus (strain 2308), this protein is Histidinol-phosphate aminotransferase.